We begin with the raw amino-acid sequence, 486 residues long: Monocarboxylate transporter 12 (486 aa).

The Cytoplasmic portion of the chain corresponds to 1–9; it reads MTKITRVGS. The next 6 helical transmembrane spans lie at 10–30, 58–78, 86–106, 115–135, 148–168, and 177–197; these read ASPP…LVTI, AWIH…GSVV, AGIM…SFAT, LGVL…AMVG, IAMS…QLLI, and LLIL…MRPI. The segment covering 201-220 has biased composition (basic and acidic residues); sequence EDPSGPEKSHDRDAQREDCK. Residues 201–221 are disordered; it reads EDPSGPEKSHDRDAQREDCKQ. 6 consecutive transmembrane segments (helical) span residues 253-273, 289-309, 320-340, 353-373, 383-403, and 410-430; these read FVVL…LFVY, AFLM…FGWL, YVCY…LPML, FGYF…EIVG, VVYF…GWLV, and TAAF…LGFA. The Cytoplasmic segment spans residues 431–486; the sequence is KIAKRMKRTQVPFLVKDSDPKLHLWTNGSVAYSIAKELDQKDEESLAKARTGCNLT.

This sequence belongs to the major facilitator superfamily. Monocarboxylate porter (TC 2.A.1.13) family. Interacts with isoform 2 of BSG; this interaction is required for its localization to the plasma membrane. As to expression, detected in kidney, choroid plexus, testis, lung, stomach, large and small intestine, spleen, fat and parotid gland. In eye, expressed in cornea, ciliary epithelium, lens epithelium and lens fiber.

The protein localises to the cell membrane. It is found in the basolateral cell membrane. The catalysed reaction is creatine(in) = creatine(out). It carries out the reaction guanidinoacetate(in) = guanidinoacetate(out). Its activity is regulated as follows. Creatine uptake is inhibited by carbonyl cyanide 3-chlorophenylhydrazone (CCCP) and by valinomycin. Functionally, functions as a transporter for creatine and as well for its precursor guanidinoacetate. Transport of creatine and GAA is independent of resting membrane potential and extracellular Na(+), Cl(-), or pH. Contributes to the process of creatine biosynthesis and distribution. This Rattus norvegicus (Rat) protein is Monocarboxylate transporter 12.